A 320-amino-acid chain; its full sequence is o-succinylbenzoate synthase (320 aa).

Residue lysine 133 is the Proton donor of the active site. Mg(2+) is bound by residues aspartate 161, glutamate 190, and aspartate 213. Catalysis depends on lysine 235, which acts as the Proton acceptor.

Belongs to the mandelate racemase/muconate lactonizing enzyme family. MenC type 1 subfamily. A divalent metal cation is required as a cofactor.

It catalyses the reaction (1R,6R)-6-hydroxy-2-succinyl-cyclohexa-2,4-diene-1-carboxylate = 2-succinylbenzoate + H2O. The protein operates within quinol/quinone metabolism; 1,4-dihydroxy-2-naphthoate biosynthesis; 1,4-dihydroxy-2-naphthoate from chorismate: step 4/7. It functions in the pathway quinol/quinone metabolism; menaquinone biosynthesis. Its function is as follows. Converts 2-succinyl-6-hydroxy-2,4-cyclohexadiene-1-carboxylate (SHCHC) to 2-succinylbenzoate (OSB). The sequence is that of o-succinylbenzoate synthase from Salmonella arizonae (strain ATCC BAA-731 / CDC346-86 / RSK2980).